Consider the following 892-residue polypeptide: Nitrogen assimilation transcription factor nirA (892 aa).

The segment at 1–32 (MGEKLDPELSSDGPHTKSSSKGQGTSTDNAPA) is disordered. Residues 16–27 (TKSSSKGQGTST) are compositionally biased toward low complexity. Positions 42-70 (CIACRRRKSKCDGNLPSCAACSSVYHTTC) form a DNA-binding region, zn(2)-C6 fungal-type. 3 disordered regions span residues 646–714 (GPWD…SGPV), 731–761 (AHNEARQPEPTYLRPVSTSYGPVPSTQSAQE), and 842–892 (PNIP…SFQR). Residues 649–674 (DQAASPSTTSDSPPSVSSQSVVATTD) are compositionally biased toward low complexity. Composition is skewed to polar residues over residues 675–714 (LSQPVSQSAGNQPANPSMGTSPNLTQPVASQYSSTPSGPV), 746–761 (VSTSYGPVPSTQSAQE), and 876–892 (NVNSNQTNMIFPGSFQR).

The protein resides in the nucleus. Functionally, pathway-specific regulatory gene of nitrate assimilation; it activates the transcription of the genes for nitrate and nitrite reductases (niaD and niiA). The sequence is that of Nitrogen assimilation transcription factor nirA (nirA) from Emericella nidulans (strain FGSC A4 / ATCC 38163 / CBS 112.46 / NRRL 194 / M139) (Aspergillus nidulans).